An 873-amino-acid chain; its full sequence is Rho GTPase-activating protein gacJJ (873 aa).

The interval 64–147 is disordered; that stretch reads DEPSSINTSS…NVNNSSNAPT (84 aa). A compositionally biased stretch (low complexity) spans 66–91; the sequence is PSSINTSSGNIGSNNNSSSNTPLTGS. A compositionally biased stretch (gly residues) spans 103-112; it reads IGGGGGGGDN. A compositionally biased stretch (low complexity) spans 113–144; that stretch reads GITNSGNIGSSSNSDLKKSTSSGIVNVNNSSN. Positions 301-402 constitute a PH domain; it reads NPVREGYLKK…WTVLPIVIES (102 aa). The region spanning 428 to 621 is the Rho-GAP domain; that stretch reads VPIEKTVSGN…SLIRDYQYIF (194 aa). An SH3 domain is found at 628 to 694; it reads EQKILAKSLY…PASYVELLPH (67 aa). Residues 715-761 are a coiled coil; it reads MLEMESTKTKNQEIDKNIKQLEITKKELESTINDLENEKAALENDPT.

The protein localises to the cytoplasm. Rho GTPase-activating protein involved in the signal transduction pathway. This chain is Rho GTPase-activating protein gacJJ (gacJJ), found in Dictyostelium discoideum (Social amoeba).